The chain runs to 203 residues: Small ribosomal subunit protein uS3 (203 aa).

It belongs to the universal ribosomal protein uS3 family. Part of the 30S ribosomal subunit. Forms a tight complex with proteins S10 and S14.

In terms of biological role, binds the lower part of the 30S subunit head. Binds mRNA in the 70S ribosome, positioning it for translation. In Carsonella ruddii (strain PV), this protein is Small ribosomal subunit protein uS3.